The sequence spans 108 residues: Small ribosomal subunit protein eS25B (108 aa).

Residues 1-20 show a composition bias toward low complexity; that stretch reads MPPKQQLSKAAKAAAALAGG. The interval 1–30 is disordered; sequence MPPKQQLSKAAKAAAALAGGKKSKKKWSKK. At P2 the chain carries N,N-dimethylproline; by NTM1. The span at 21–30 shows a compositional bias: basic residues; sequence KKSKKKWSKK.

This sequence belongs to the eukaryotic ribosomal protein eS25 family. Component of the small ribosomal subunit (SSU). Mature yeast ribosomes consist of a small (40S) and a large (60S) subunit. The 40S small subunit contains 1 molecule of ribosomal RNA (18S rRNA) and 33 different proteins (encoded by 57 genes). The large 60S subunit contains 3 rRNA molecules (25S, 5.8S and 5S rRNA) and 46 different proteins (encoded by 81 genes).

It localises to the cytoplasm. Functionally, component of the ribosome, a large ribonucleoprotein complex responsible for the synthesis of proteins in the cell. The small ribosomal subunit (SSU) binds messenger RNAs (mRNAs) and translates the encoded message by selecting cognate aminoacyl-transfer RNA (tRNA) molecules. The large subunit (LSU) contains the ribosomal catalytic site termed the peptidyl transferase center (PTC), which catalyzes the formation of peptide bonds, thereby polymerizing the amino acids delivered by tRNAs into a polypeptide chain. The nascent polypeptides leave the ribosome through a tunnel in the LSU and interact with protein factors that function in enzymatic processing, targeting, and the membrane insertion of nascent chains at the exit of the ribosomal tunnel. The chain is Small ribosomal subunit protein eS25B from Saccharomyces cerevisiae (strain ATCC 204508 / S288c) (Baker's yeast).